We begin with the raw amino-acid sequence, 157 residues long: N-acetylgalactosamine-specific phosphotransferase enzyme IIB component 2 (157 aa).

The PTS EIIB type-4 domain maps to 1–157; sequence MPNIVLSRID…EPAVDLFKLL (157 aa). His15 serves as the catalytic Pros-phosphohistidine intermediate.

Its subcellular location is the cytoplasm. The phosphoenolpyruvate-dependent sugar phosphotransferase system (sugar PTS), a major carbohydrate active -transport system, catalyzes the phosphorylation of incoming sugar substrates concomitantly with their translocation across the cell membrane. This system is involved in N-acetylgalactosamine transport. This Escherichia coli (strain K12) protein is N-acetylgalactosamine-specific phosphotransferase enzyme IIB component 2 (agaV).